We begin with the raw amino-acid sequence, 601 residues long: DNA ligase (601 aa).

Asp-258 is a binding site for ATP. Lys-260 serves as the catalytic N6-AMP-lysine intermediate. Arg-265, Arg-280, Glu-310, Phe-350, Arg-427, and Lys-433 together coordinate ATP. The disordered stretch occupies residues 568-601 (DKSPEDATTTDEILEMYNKQPKKKIESPPIDESV).

The protein belongs to the ATP-dependent DNA ligase family. It depends on Mg(2+) as a cofactor.

The enzyme catalyses ATP + (deoxyribonucleotide)n-3'-hydroxyl + 5'-phospho-(deoxyribonucleotide)m = (deoxyribonucleotide)n+m + AMP + diphosphate.. In terms of biological role, DNA ligase that seals nicks in double-stranded DNA during DNA replication, DNA recombination and DNA repair. The polypeptide is DNA ligase (Saccharolobus islandicus (strain L.S.2.15 / Lassen #1) (Sulfolobus islandicus)).